Here is a 593-residue protein sequence, read N- to C-terminus: Aspartate--tRNA ligase (593 aa).

Glutamate 180 contacts L-aspartate. The aspartate stretch occupies residues 204 to 207; that stretch reads QIFK. L-aspartate is bound at residue arginine 226. ATP-binding positions include 226–228 and glutamine 235; that span reads RDE. Histidine 453 contributes to the L-aspartate binding site. Glutamate 487 contributes to the ATP binding site. Position 494 (arginine 494) interacts with L-aspartate. 539 to 542 contacts ATP; sequence GLDR.

Belongs to the class-II aminoacyl-tRNA synthetase family. Type 1 subfamily. As to quaternary structure, homodimer.

It localises to the cytoplasm. The catalysed reaction is tRNA(Asp) + L-aspartate + ATP = L-aspartyl-tRNA(Asp) + AMP + diphosphate. Its function is as follows. Catalyzes the attachment of L-aspartate to tRNA(Asp) in a two-step reaction: L-aspartate is first activated by ATP to form Asp-AMP and then transferred to the acceptor end of tRNA(Asp). The sequence is that of Aspartate--tRNA ligase from Clostridium botulinum (strain Loch Maree / Type A3).